The primary structure comprises 88 residues: Small ribosomal subunit protein bS20 (88 aa).

This sequence belongs to the bacterial ribosomal protein bS20 family.

Binds directly to 16S ribosomal RNA. In Rhodopseudomonas palustris (strain BisB18), this protein is Small ribosomal subunit protein bS20.